Here is a 600-residue protein sequence, read N- to C-terminus: Integrator complex subunit 11 (600 aa).

6 residues coordinate Zn(2+): His68, His70, Asp72, His73, His157, and Asp178. The short motif at 68–73 is the HXHXDH motif element; that stretch reads HFHLDH. Glu203 is an active-site residue. A Glycyl lysine isopeptide (Lys-Gly) (interchain with G-Cter in SUMO) cross-link involves residue Lys381. His414 contributes to the Zn(2+) binding site. Residues Lys462 and Lys475 each participate in a glycyl lysine isopeptide (Lys-Gly) (interchain with G-Cter in SUMO) cross-link. The Nuclear localization signal motif lies at 469-479; that stretch reads LLPEAKKPRLL.

Belongs to the metallo-beta-lactamase superfamily. RNA-metabolizing metallo-beta-lactamase-like family. INTS11 subfamily. As to quaternary structure, component of the Integrator complex, composed of core subunits INTS1, INTS2, INTS3, INTS4, INTS5, INTS6, INTS7, INTS8, INTS9/RC74, INTS10, INTS11/CPSF3L, INTS12, INTS13, INTS14 and INTS15. The core complex associates with protein phosphatase 2A subunits PPP2CA and PPP2R1A, to form the Integrator-PP2A (INTAC) complex. INTS11 is part of the RNA endonuclease subcomplex, composed of INTS4, INTS9, INTS11 and inositol hexakisphosphate (InsP6). Interacts with WDR73; interaction is required for the assembly of the RNA endonuclease subcomplex in the cytoplasm. Interacts with BRAT1; interaction is required for the assembly of the RNA endonuclease subcomplex and inhibits the endonuclease activity of INTS11 before formation of mature integrator complex. Zn(2+) is required as a cofactor. Post-translationally, sumoylated; sumoylation regulates its subcellular location and is required for integrator complex integrity.

The protein resides in the nucleus. It is found in the cytoplasm. The RNA endonuclease activity is inhibited by BRAT1 that forms hyrogen bond and hydrophobic interactions with the active site. RNA endonuclease component of the integrator complex, a multiprotein complex that terminates RNA polymerase II (Pol II) transcription in the promoter-proximal region of genes. The integrator complex provides a quality checkpoint during transcription elongation by driving premature transcription termination of transcripts that are unfavorably configured for transcriptional elongation: the complex terminates transcription by (1) catalyzing dephosphorylation of the C-terminal domain (CTD) of Pol II subunit POLR2A/RPB1 and SUPT5H/SPT5, (2) degrading the exiting nascent RNA transcript via endonuclease activity and (3) promoting the release of Pol II from bound DNA. The integrator complex is also involved in terminating the synthesis of non-coding Pol II transcripts, such as enhancer RNAs (eRNAs), small nuclear RNAs (snRNAs), telomerase RNAs and long non-coding RNAs (lncRNAs). Within the integrator complex, INTS11 constitutes the RNA endonuclease subunit that degrades exiting nascent RNA transcripts. Mediates recruitment of cytoplasmic dynein to the nuclear envelope, probably as component of the integrator complex. This chain is Integrator complex subunit 11 (INTS11), found in Pongo abelii (Sumatran orangutan).